The primary structure comprises 601 residues: Kelch repeat and BTB domain-containing protein 8 (601 aa).

Residues 48–116 (TDIVVEVDHG…AYTSRVTLTE (69 aa)) form the BTB domain. In terms of domain architecture, BACK spans 151–253 (CIGVFMFADA…LEEAFLSRIP (103 aa)). Kelch repeat units lie at residues 336–390 (DIFI…HCCG), 391–441 (KLYA…EYKD), 443–481 (IYVLQGEYFFCFDPRKDYWGHLPSMNIPRTQGLAALHKN), 482–529 (CIYY…KVLL), and 542–588 (QVMV…FECV).

Belongs to the KBTBD8 family. As to quaternary structure, component of the BCR(KBTBD8) E3 ubiquitin ligase complex.

It is found in the cytoplasm. The protein localises to the cytoskeleton. The protein resides in the spindle. It localises to the golgi apparatus. Substrate-specific adapter of a BCR (BTB-CUL3-RBX1) E3 ubiquitin ligase complex that acts as a regulator of neural crest specification. The BCR(KBTBD8) complex acts by mediating monoubiquitination of target proteins. The chain is Kelch repeat and BTB domain-containing protein 8 (kbtbd8) from Danio rerio (Zebrafish).